The primary structure comprises 252 residues: Cell division protein ZapD (252 aa).

Belongs to the ZapD family. Interacts with FtsZ.

The protein localises to the cytoplasm. Cell division factor that enhances FtsZ-ring assembly. Directly interacts with FtsZ and promotes bundling of FtsZ protofilaments, with a reduction in FtsZ GTPase activity. The polypeptide is Cell division protein ZapD (Chromobacterium violaceum (strain ATCC 12472 / DSM 30191 / JCM 1249 / CCUG 213 / NBRC 12614 / NCIMB 9131 / NCTC 9757 / MK)).